The following is a 283-amino-acid chain: NAD kinase (283 aa).

The active-site Proton acceptor is the Asp-68. NAD(+) contacts are provided by residues 68 to 69, 142 to 143, Arg-153, Asp-172, 183 to 188, and Gln-242; these read DG, ND, and TAYSLS.

This sequence belongs to the NAD kinase family. The cofactor is a divalent metal cation.

It localises to the cytoplasm. The enzyme catalyses NAD(+) + ATP = ADP + NADP(+) + H(+). Functionally, involved in the regulation of the intracellular balance of NAD and NADP, and is a key enzyme in the biosynthesis of NADP. Catalyzes specifically the phosphorylation on 2'-hydroxyl of the adenosine moiety of NAD to yield NADP. In Caldanaerobacter subterraneus subsp. tengcongensis (strain DSM 15242 / JCM 11007 / NBRC 100824 / MB4) (Thermoanaerobacter tengcongensis), this protein is NAD kinase.